The sequence spans 496 residues: Probable E3 ubiquitin-protein ligase ARI12 (496 aa).

The tract at residues 110-319 (NEYFCGACGE…GDLHFCTFDA (210 aa)) is TRIAD supradomain. The Zn(2+) site is built by Cys114, Cys117, Cys131, His133, Cys136, Cys139, Cys162, Cys172, Cys240, Cys243, His248, Cys253, Cys267, Cys270, Cys286, and Cys289. The segment at 114–172 (CGACGESHPHKNLASVSCGHRICTRCWTSHINKIISEKPAAEWNLWLKCPVRVGLHASC) adopts an RING-type 1 zinc-finger fold. The IBR-type zinc finger occupies 191 to 253 (FNYNQYLLRS…REDAHSPVDC (63 aa)). Residues 267–297 (CPKCKLRIPRNQDNSLKMKCLPCNYVFCWFC) form an RING-type 2; atypical zinc finger.

Belongs to the RBR family. Ariadne subfamily. The cofactor is Zn(2+). As to expression, preferentially expressed in roots.

The catalysed reaction is [E2 ubiquitin-conjugating enzyme]-S-ubiquitinyl-L-cysteine + [acceptor protein]-L-lysine = [E2 ubiquitin-conjugating enzyme]-L-cysteine + [acceptor protein]-N(6)-ubiquitinyl-L-lysine.. Its pathway is protein modification; protein ubiquitination. Functionally, might act as an E3 ubiquitin-protein ligase, or as part of E3 complex, which accepts ubiquitin from specific E2 ubiquitin-conjugating enzymes and then transfers it to substrates. This Arabidopsis thaliana (Mouse-ear cress) protein is Probable E3 ubiquitin-protein ligase ARI12 (ARI12).